Reading from the N-terminus, the 378-residue chain is Putative aminoglycoside phosphotransferase (378 aa).

Residues Arg79 and 134-136 (DYV) each bind ATP. Asp249 functions as the Proton acceptor in the catalytic mechanism. Asn254, Asp267, and Glu269 together coordinate Mg(2+).

Belongs to the aminoglycoside phosphotransferase family.

Might catalyze the phosphorylation of aminoglycosides and confer aminoglycoside antibiotics resistance. This Mycobacterium tuberculosis (strain CDC 1551 / Oshkosh) protein is Putative aminoglycoside phosphotransferase.